We begin with the raw amino-acid sequence, 212 residues long: ATP-dependent Clp protease proteolytic subunit (212 aa).

Ser-114 serves as the catalytic Nucleophile. His-139 is a catalytic residue.

This sequence belongs to the peptidase S14 family. As to quaternary structure, fourteen ClpP subunits assemble into 2 heptameric rings which stack back to back to give a disk-like structure with a central cavity, resembling the structure of eukaryotic proteasomes.

It localises to the cytoplasm. The catalysed reaction is Hydrolysis of proteins to small peptides in the presence of ATP and magnesium. alpha-casein is the usual test substrate. In the absence of ATP, only oligopeptides shorter than five residues are hydrolyzed (such as succinyl-Leu-Tyr-|-NHMec, and Leu-Tyr-Leu-|-Tyr-Trp, in which cleavage of the -Tyr-|-Leu- and -Tyr-|-Trp bonds also occurs).. In terms of biological role, cleaves peptides in various proteins in a process that requires ATP hydrolysis. Has a chymotrypsin-like activity. Plays a major role in the degradation of misfolded proteins. This Azoarcus sp. (strain BH72) protein is ATP-dependent Clp protease proteolytic subunit.